The following is a 189-amino-acid chain: Elongation factor P (189 aa).

Position 34 is an N6-(3,6-diaminohexanoyl)-5-hydroxylysine (lysine 34).

Belongs to the elongation factor P family. Post-translationally, may be beta-lysylated on the epsilon-amino group of Lys-34 by the combined action of EpmA and EpmB, and then hydroxylated on the C5 position of the same residue by EpmC (if this protein is present). Lysylation is critical for the stimulatory effect of EF-P on peptide-bond formation. The lysylation moiety may extend toward the peptidyltransferase center and stabilize the terminal 3-CCA end of the tRNA. Hydroxylation of the C5 position on Lys-34 may allow additional potential stabilizing hydrogen-bond interactions with the P-tRNA.

The protein resides in the cytoplasm. It functions in the pathway protein biosynthesis; polypeptide chain elongation. In terms of biological role, involved in peptide bond synthesis. Alleviates ribosome stalling that occurs when 3 or more consecutive Pro residues or the sequence PPG is present in a protein, possibly by augmenting the peptidyl transferase activity of the ribosome. Modification of Lys-34 is required for alleviation. The sequence is that of Elongation factor P from Francisella tularensis subsp. novicida (strain U112).